The sequence spans 298 residues: Oxygen-dependent coproporphyrinogen-III oxidase (298 aa).

Ser92 is a substrate binding site. His96 and His106 together coordinate a divalent metal cation. The Proton donor role is filled by His106. Residue 108 to 110 (NVR) coordinates substrate. 2 residues coordinate a divalent metal cation: His145 and His175. The important for dimerization stretch occupies residues 239 to 274 (YVEFNLVYDRGTLFGLQSGGRSESILMSLPPRVRWE). Position 257–259 (257–259 (GGR)) interacts with substrate.

This sequence belongs to the aerobic coproporphyrinogen-III oxidase family. Homodimer. A divalent metal cation is required as a cofactor.

The protein resides in the cytoplasm. It carries out the reaction coproporphyrinogen III + O2 + 2 H(+) = protoporphyrinogen IX + 2 CO2 + 2 H2O. It functions in the pathway porphyrin-containing compound metabolism; protoporphyrin-IX biosynthesis; protoporphyrinogen-IX from coproporphyrinogen-III (O2 route): step 1/1. Functionally, involved in the heme biosynthesis. Catalyzes the aerobic oxidative decarboxylation of propionate groups of rings A and B of coproporphyrinogen-III to yield the vinyl groups in protoporphyrinogen-IX. The sequence is that of Oxygen-dependent coproporphyrinogen-III oxidase from Stenotrophomonas maltophilia (strain R551-3).